We begin with the raw amino-acid sequence, 315 residues long: Calumenin (315 aa).

An N-terminal signal peptide occupies residues 1 to 19 (MDLRQFLMCLSLCTAFALS). Ser44 bears the Phosphoserine mark. Position 47 is a phosphotyrosine (Tyr47). The residue at position 65 (Thr65) is a Phosphothreonine. EF-hand domains are found at residues 68–103 (ESKE…AQKR), 104–139 (WIYE…YVLD), 151–186 (QMMV…EEYD), 188–223 (MKDI…HDGN), 229–264 (WVKT…SDYD), and 265–300 (HAEA…FVGS). At Ser69 the chain carries Phosphoserine; by FAM20C. The Ca(2+) site is built by Asp81, Asp83, Asp85, Glu92, Asp117, Asn119, Asp121, and Glu128. Asn131 carries N-linked (GlcNAc...) (complex) asparagine glycosylation. Asp164 is a binding site for Ca(2+). N6-acetyllysine is present on Lys165. Residues Asp166, Asp168, Glu175, Asp201, Asn203, Asp205, Glu212, Asp242, Asn244, Asp246, Lys248, and Glu253 each coordinate Ca(2+). At Thr254 the chain carries Phosphothreonine. A phosphoserine mark is found at Ser261 and Ser277. Positions 278, 280, 282, 284, and 289 each coordinate Ca(2+). The Prevents secretion from ER signature appears at 312–315 (HDEF).

The protein belongs to the CREC family. As to quaternary structure, interacts with GGCX. As to expression, ubiquitously expressed. Expressed at high levels in heart, placenta and skeletal muscle, at lower levels in lung, kidney and pancreas and at very low levels in brain and liver.

The protein resides in the endoplasmic reticulum membrane. The protein localises to the golgi apparatus. Its subcellular location is the secreted. It localises to the melanosome. It is found in the sarcoplasmic reticulum lumen. Functionally, involved in regulation of vitamin K-dependent carboxylation of multiple N-terminal glutamate residues. Seems to inhibit gamma-carboxylase GGCX. Binds 7 calcium ions with a low affinity. In Homo sapiens (Human), this protein is Calumenin (CALU).